The primary structure comprises 86 residues: Large ribosomal subunit protein bL27 (86 aa).

A disordered region spans residues 1–22 (MAHKKAGGSSRNGRDSESKRLG).

Belongs to the bacterial ribosomal protein bL27 family.

The protein is Large ribosomal subunit protein bL27 of Acidithiobacillus ferrooxidans (strain ATCC 23270 / DSM 14882 / CIP 104768 / NCIMB 8455) (Ferrobacillus ferrooxidans (strain ATCC 23270)).